Consider the following 1265-residue polypeptide: Guanine nucleotide exchange factor SDC25 (1265 aa).

The SH3 domain maps to 26-97 (QPIDVVECTY…PPSFTRSILN (72 aa)). Disordered stretches follow at residues 409–454 (IPAS…DTIW) and 623–648 (LNLD…DEYE). Residues 416–428 (TSCSSETSHHSPS) are compositionally biased toward low complexity. One can recognise an N-terminal Ras-GEF domain in the interval 782-914 (SNNRIKGGSK…LLKEVNQKFK (133 aa)). The region spanning 952 to 1199 (DPVLFATQLT…YQLSLIIEPK (248 aa)) is the Ras-GEF domain. The tract at residues 1201-1252 (RKKVVPNSNSNNKSQEKSRDDQTDEGKTSTKKDRFSKFQLHKTKKKAPKVSK) is disordered. The segment covering 1214-1236 (SQEKSRDDQTDEGKTSTKKDRFS) has biased composition (basic and acidic residues). Residues 1239–1252 (QLHKTKKKAPKVSK) are compositionally biased toward basic residues.

Its function is as follows. Promotes the exchange of Ras-bound GDP by GTP. The polypeptide is Guanine nucleotide exchange factor SDC25 (SDC25) (Saccharomyces cerevisiae (strain AWRI1631) (Baker's yeast)).